The primary structure comprises 702 residues: Polynucleotide 5'-hydroxyl-kinase NOL9 (702 aa).

A2 carries the post-translational modification N-acetylalanine. Residues 31–47 (RRPRRRLGSLRWCGRRR) carry the Nucleolar localization signal motif. The interval 69–101 (VSRAAAARRPNTATPSPIPSPTPASEPESEPEL) is disordered. Residues 71–83 (RAAAARRPNTATP) are compositionally biased toward low complexity. 306-313 (GSQDVGKS) contributes to the ATP binding site. The segment at 480–702 (FADEEKESPV…RRPKFCRKMK (223 aa)) is interaction with LAS1L. Residue K485 forms a Glycyl lysine isopeptide (Lys-Gly) (interchain with G-Cter in SUMO2) linkage. Residue S487 is modified to Phosphoserine. Residues 680–689 (AREPEEAHKE) are compositionally biased toward basic and acidic residues. Residues 680–702 (AREPEEAHKEKPYRRPKFCRKMK) form a disordered region. Residues 690–702 (KPYRRPKFCRKMK) are compositionally biased toward basic residues.

It belongs to the Clp1 family. NOL9/GRC3 subfamily. As to quaternary structure, interacts with PELP1, WDR18 and SENP3. Interacts with LAS1L to form an ITS2 pre-rRNA endonuclease-kinase complex.

The protein resides in the nucleus. It localises to the nucleolus. The catalysed reaction is a 5'-end dephospho-2'-deoxyribonucleoside-DNA + ATP = a 5'-end 5'-phospho-2'-deoxyribonucleoside-DNA + ADP + H(+). The enzyme catalyses a 5'-end dephospho-ribonucleoside-RNA + ATP = a 5'-end 5'-phospho-ribonucleoside-RNA + ADP + H(+). In terms of biological role, polynucleotide kinase that can phosphorylate the 5'-hydroxyl groups of single-stranded and double-stranded RNA and DNA substrates. Involved in rRNA processing and its kinase activity is required for the processing of the 32S precursor into 5.8S and 28S rRNAs, more specifically for the generation of the major 5.8S(S) form. Required for the efficient pre-rRNA processing of internal transcribed spacer 2 (ITS2). Associates with LAS1L to form an ITS2 pre-rRNA endonuclease-kinase complex and is responsible for the transport of this complex into the nucleolus. This is Polynucleotide 5'-hydroxyl-kinase NOL9 (NOL9) from Homo sapiens (Human).